The chain runs to 336 residues: Holliday junction branch migration complex subunit RuvB (336 aa).

The large ATPase domain (RuvB-L) stretch occupies residues 4-185; it reads ADRLISADIQ…FGIVQRLEFY (182 aa). Residues Ile-24, Arg-25, Gly-66, Lys-69, Thr-70, Thr-71, 132–134, Arg-175, Tyr-185, and Arg-222 contribute to the ATP site; that span reads EDY. Position 70 (Thr-70) interacts with Mg(2+). The segment at 186-256 is small ATPAse domain (RuvB-S); that stretch reads NVDDLQHIVA…IASKALDMLN (71 aa). Residues 259 to 336 are head domain (RuvB-H); the sequence is AAGFDYLDRK…RHFNRIMEAP (78 aa). Residues Arg-295, Arg-314, and Arg-319 each contribute to the DNA site.

Belongs to the RuvB family. In terms of assembly, homohexamer. Forms an RuvA(8)-RuvB(12)-Holliday junction (HJ) complex. HJ DNA is sandwiched between 2 RuvA tetramers; dsDNA enters through RuvA and exits via RuvB. An RuvB hexamer assembles on each DNA strand where it exits the tetramer. Each RuvB hexamer is contacted by two RuvA subunits (via domain III) on 2 adjacent RuvB subunits; this complex drives branch migration. In the full resolvosome a probable DNA-RuvA(4)-RuvB(12)-RuvC(2) complex forms which resolves the HJ.

It localises to the cytoplasm. The enzyme catalyses ATP + H2O = ADP + phosphate + H(+). Its function is as follows. The RuvA-RuvB-RuvC complex processes Holliday junction (HJ) DNA during genetic recombination and DNA repair, while the RuvA-RuvB complex plays an important role in the rescue of blocked DNA replication forks via replication fork reversal (RFR). RuvA specifically binds to HJ cruciform DNA, conferring on it an open structure. The RuvB hexamer acts as an ATP-dependent pump, pulling dsDNA into and through the RuvAB complex. RuvB forms 2 homohexamers on either side of HJ DNA bound by 1 or 2 RuvA tetramers; 4 subunits per hexamer contact DNA at a time. Coordinated motions by a converter formed by DNA-disengaged RuvB subunits stimulates ATP hydrolysis and nucleotide exchange. Immobilization of the converter enables RuvB to convert the ATP-contained energy into a lever motion, pulling 2 nucleotides of DNA out of the RuvA tetramer per ATP hydrolyzed, thus driving DNA branch migration. The RuvB motors rotate together with the DNA substrate, which together with the progressing nucleotide cycle form the mechanistic basis for DNA recombination by continuous HJ branch migration. Branch migration allows RuvC to scan DNA until it finds its consensus sequence, where it cleaves and resolves cruciform DNA. This chain is Holliday junction branch migration complex subunit RuvB, found in Proteus mirabilis (strain HI4320).